Here is a 350-residue protein sequence, read N- to C-terminus: Inositol 2-dehydrogenase/D-chiro-inositol 3-dehydrogenase (350 aa).

The protein belongs to the Gfo/Idh/MocA family. As to quaternary structure, homotetramer.

It catalyses the reaction myo-inositol + NAD(+) = scyllo-inosose + NADH + H(+). The enzyme catalyses 1D-chiro-inositol + NAD(+) = scyllo-inosine + NADH + H(+). It functions in the pathway polyol metabolism; myo-inositol degradation into acetyl-CoA; acetyl-CoA from myo-inositol: step 1/7. In terms of biological role, involved in the oxidation of myo-inositol (MI) and D-chiro-inositol (DCI) to 2-keto-myo-inositol (2KMI or 2-inosose) and 1-keto-D-chiro-inositol (1KDCI), respectively. This is Inositol 2-dehydrogenase/D-chiro-inositol 3-dehydrogenase from Lactiplantibacillus plantarum (strain ATCC BAA-793 / NCIMB 8826 / WCFS1) (Lactobacillus plantarum).